The chain runs to 495 residues: OTU domain-containing protein CG3251 (495 aa).

An OTU domain is found at 29–150 (LFRKHMLGDA…MGHFETVLTM (122 aa)). The region spanning 302–364 (NFKVGAKCQV…HPLPPDEFKA (63 aa)) is the Tudor domain. The span at 375 to 389 (LHNSQMGRQSVQGDQ) shows a compositional bias: polar residues. The tract at residues 375–404 (LHNSQMGRQSVQGDQQGFVPDPMPGTAPSM) is disordered. A compositionally biased stretch (pro residues) spans 395–404 (DPMPGTAPSM).

In terms of biological role, putative OTU-type deubiquitinase. Catalytically inactive towards all diubiquitin molecules and long K48- and K63- linked ubiquitin chains in vitro. Potential modulator of apoptosis. This Drosophila melanogaster (Fruit fly) protein is OTU domain-containing protein CG3251.